The following is a 483-amino-acid chain: MRDGEQTPGVALTREKKLLIARALDEMRINVIEAGSAITSAGERESIKAVANAGLDAEICSYCRIVKMDVDHALECDVDSIHLVAPVSDLHIKTKIKKDRDTVRQIAAEVTEYAKDHGLIVELSGEDASRADPEFLKAIYSDGIDAGADRLCFCDTVGLLVPEKTTEIFRDLSSSLKAPISIHCHNDFGLATANTVAALAAGAKQSHVTINGLGERAGNASLEEVVMSLEWLYKYDTGIKHEQIYRTSRLVSRLTGIPVSPNKALVGGNAFTHEAGIHVHGLLADKSTYEPMSPEYIGRQRQIVLGKHAGRSSITLALKEMGLEADEAQTEEIFNRVKQMGDQGKHITDADLQTIAETVLDIYKEPIVKLEEFTIVSGNRVTPTASIKLNVKDKEIVQAGIGNGPVDAVINAIRRAVSSCAEDVVLEEYHVDSITGGTDALVEVRVKLSKNGKVITASGARTDIIMASVEAVMNGMNRLIREE.

Positions 1–245 (MRDGEQTPGV…DTGIKHEQIY (245 aa)) constitute a Pyruvate carboxyltransferase domain.

It belongs to the alpha-IPM synthase/homocitrate synthase family. Homodimer.

It catalyses the reaction pyruvate + acetyl-CoA + H2O = (3R)-citramalate + CoA + H(+). The protein operates within amino-acid biosynthesis; L-isoleucine biosynthesis; 2-oxobutanoate from pyruvate: step 1/3. Functionally, catalyzes the condensation of pyruvate and acetyl-coenzyme A to form (R)-citramalate. The protein is Putative (R)-citramalate synthase CimA of Methanosarcina acetivorans (strain ATCC 35395 / DSM 2834 / JCM 12185 / C2A).